Consider the following 315-residue polypeptide: tRNA dimethylallyltransferase (315 aa).

13-20 (GPTAVGKT) contacts ATP. 15–20 (TAVGKT) contacts substrate. Positions 38–41 (DSMQ) are interaction with substrate tRNA.

This sequence belongs to the IPP transferase family. In terms of assembly, monomer. Mg(2+) is required as a cofactor.

The catalysed reaction is adenosine(37) in tRNA + dimethylallyl diphosphate = N(6)-dimethylallyladenosine(37) in tRNA + diphosphate. In terms of biological role, catalyzes the transfer of a dimethylallyl group onto the adenine at position 37 in tRNAs that read codons beginning with uridine, leading to the formation of N6-(dimethylallyl)adenosine (i(6)A). This chain is tRNA dimethylallyltransferase, found in Staphylococcus saprophyticus subsp. saprophyticus (strain ATCC 15305 / DSM 20229 / NCIMB 8711 / NCTC 7292 / S-41).